Consider the following 301-residue polypeptide: Homoserine O-acetyltransferase (301 aa).

Cys-142 functions as the Acyl-thioester intermediate in the catalytic mechanism. Residues Lys-163 and Ser-192 each contribute to the substrate site. His-235 (proton acceptor) is an active-site residue. The active site involves Glu-237. Arg-249 lines the substrate pocket.

The protein belongs to the MetA family.

The protein resides in the cytoplasm. It carries out the reaction L-homoserine + acetyl-CoA = O-acetyl-L-homoserine + CoA. It participates in amino-acid biosynthesis; L-methionine biosynthesis via de novo pathway; O-acetyl-L-homoserine from L-homoserine: step 1/1. Its function is as follows. Transfers an acetyl group from acetyl-CoA to L-homoserine, forming acetyl-L-homoserine. This Novosphingobium aromaticivorans (strain ATCC 700278 / DSM 12444 / CCUG 56034 / CIP 105152 / NBRC 16084 / F199) protein is Homoserine O-acetyltransferase.